The sequence spans 158 residues: SsrA-binding protein (158 aa).

The disordered stretch occupies residues 131–158; that stretch reads KQLHDKRQTEKERDWNKQKQRILQTNQR. Residues 132 to 147 are compositionally biased toward basic and acidic residues; the sequence is QLHDKRQTEKERDWNK.

This sequence belongs to the SmpB family.

It localises to the cytoplasm. Functionally, required for rescue of stalled ribosomes mediated by trans-translation. Binds to transfer-messenger RNA (tmRNA), required for stable association of tmRNA with ribosomes. tmRNA and SmpB together mimic tRNA shape, replacing the anticodon stem-loop with SmpB. tmRNA is encoded by the ssrA gene; the 2 termini fold to resemble tRNA(Ala) and it encodes a 'tag peptide', a short internal open reading frame. During trans-translation Ala-aminoacylated tmRNA acts like a tRNA, entering the A-site of stalled ribosomes, displacing the stalled mRNA. The ribosome then switches to translate the ORF on the tmRNA; the nascent peptide is terminated with the 'tag peptide' encoded by the tmRNA and targeted for degradation. The ribosome is freed to recommence translation, which seems to be the essential function of trans-translation. This is SsrA-binding protein from Teredinibacter turnerae (strain ATCC 39867 / T7901).